The sequence spans 103 residues: Pyrimidine/purine nucleoside phosphorylase (103 aa).

This sequence belongs to the nucleoside phosphorylase PpnP family.

It carries out the reaction a purine D-ribonucleoside + phosphate = a purine nucleobase + alpha-D-ribose 1-phosphate. The catalysed reaction is adenosine + phosphate = alpha-D-ribose 1-phosphate + adenine. The enzyme catalyses cytidine + phosphate = cytosine + alpha-D-ribose 1-phosphate. It catalyses the reaction guanosine + phosphate = alpha-D-ribose 1-phosphate + guanine. It carries out the reaction inosine + phosphate = alpha-D-ribose 1-phosphate + hypoxanthine. The catalysed reaction is thymidine + phosphate = 2-deoxy-alpha-D-ribose 1-phosphate + thymine. The enzyme catalyses uridine + phosphate = alpha-D-ribose 1-phosphate + uracil. It catalyses the reaction xanthosine + phosphate = alpha-D-ribose 1-phosphate + xanthine. Its function is as follows. Catalyzes the phosphorolysis of diverse nucleosides, yielding D-ribose 1-phosphate and the respective free bases. Can use uridine, adenosine, guanosine, cytidine, thymidine, inosine and xanthosine as substrates. Also catalyzes the reverse reactions. In Shewanella denitrificans (strain OS217 / ATCC BAA-1090 / DSM 15013), this protein is Pyrimidine/purine nucleoside phosphorylase.